Consider the following 313-residue polypeptide: MNKAVIAIHGGAGAIARAQMSHEQELRYIQALSEIVESGQKMLEAGDSALDVVTEAVRLLEACPLFNAGIGAVYTRDGTHELDACVMDGNTLKAGAVAGVSHVRHPVLAARLVMERSPHVLMVGEGAENFAFSQGMARVSPDIFSTPARYEQLLAARAAGEMALDHSGAPLDETKKMGTVGAVARDKFGNLAAATSTGGMTNKLPGRVGDSPLVGAGCYANNASVAVSCTGTGEVFIRTLAAYDIAALMEYGGLSLADACERVVMEKLPALGGSGGLIAVDHEGNVALPFNSEGMYRAWGYAGDTPTTGIYRE.

Thr179 serves as the catalytic Nucleophile. Substrate contacts are provided by residues 207–210 and 230–233; these read RVGD and TGTG.

Belongs to the Ntn-hydrolase family. As to quaternary structure, heterotetramer of two alpha and two beta chains arranged as a dimer of alpha/beta heterodimers. In terms of processing, autocleaved. Generates the alpha and beta subunits. The beta subunit is thought to be responsible for the nucleophile hydrolase activity.

It carries out the reaction Cleavage of a beta-linked Asp residue from the N-terminus of a polypeptide.. Degrades proteins damaged by L-isoaspartyl residue formation (also known as beta-Asp residues). Degrades L-isoaspartyl-containing di- and tripeptides. Acts best on iso-Asp-Leu, followed by iso-Asp-Ala, -His and to a lesser extent iso-Asp-Lys, -Phe and iso-Asp-Leu-Ala. Does not act on internal iso-Asp bonds (Als-iso-Asp-Leu-Ala). Does not act on alpha-Asp bonds. Has poor L-asparaginase activity. In Salmonella typhimurium (strain LT2 / SGSC1412 / ATCC 700720), this protein is Isoaspartyl peptidase (iaaA).